Consider the following 437-residue polypeptide: Argininosuccinate lyase (437 aa).

The protein belongs to the lyase 1 family. Argininosuccinate lyase subfamily.

It is found in the cytoplasm. It carries out the reaction 2-(N(omega)-L-arginino)succinate = fumarate + L-arginine. The protein operates within amino-acid biosynthesis; L-arginine biosynthesis; L-arginine from L-ornithine and carbamoyl phosphate: step 3/3. The sequence is that of Argininosuccinate lyase from Clostridium acetobutylicum (strain ATCC 824 / DSM 792 / JCM 1419 / IAM 19013 / LMG 5710 / NBRC 13948 / NRRL B-527 / VKM B-1787 / 2291 / W).